We begin with the raw amino-acid sequence, 366 residues long: Ribosomal RNA large subunit methyltransferase M (366 aa).

Residues Ser-188, Cys-221 to Gly-224, Asp-240, Asp-260, and Asp-277 each bind S-adenosyl-L-methionine. The active-site Proton acceptor is Lys-306.

The protein belongs to the class I-like SAM-binding methyltransferase superfamily. RNA methyltransferase RlmE family. RlmM subfamily. In terms of assembly, monomer.

It is found in the cytoplasm. It carries out the reaction cytidine(2498) in 23S rRNA + S-adenosyl-L-methionine = 2'-O-methylcytidine(2498) in 23S rRNA + S-adenosyl-L-homocysteine + H(+). Functionally, catalyzes the 2'-O-methylation at nucleotide C2498 in 23S rRNA. This is Ribosomal RNA large subunit methyltransferase M from Escherichia coli O139:H28 (strain E24377A / ETEC).